The chain runs to 517 residues: Protein translocase subunit SecD (517 aa).

Transmembrane regions (helical) follow at residues 5-25 (LRWI…FPLD), 357-377 (IWAG…YYKF), 380-400 (FIAS…MGMF), 407-427 (PGIA…VLIF), 455-475 (IIDS…FGTG), and 479-499 (GFAV…VTLS).

It belongs to the SecD/SecF family. SecD subfamily. In terms of assembly, forms a complex with SecF. Part of the essential Sec protein translocation apparatus which comprises SecA, SecYEG and auxiliary proteins SecDF. Other proteins may also be involved.

It localises to the cell inner membrane. Functionally, part of the Sec protein translocase complex. Interacts with the SecYEG preprotein conducting channel. SecDF uses the proton motive force (PMF) to complete protein translocation after the ATP-dependent function of SecA. The sequence is that of Protein translocase subunit SecD from Calditerrivibrio nitroreducens (strain DSM 19672 / NBRC 101217 / Yu37-1).